Reading from the N-terminus, the 92-residue chain is Large ribosomal subunit protein bL27 (92 aa).

The segment at 1-21 is disordered; that stretch reads MSKKKGVGSSRNGRDSESKRL. Residues 12–21 are compositionally biased toward basic and acidic residues; sequence NGRDSESKRL.

This sequence belongs to the bacterial ribosomal protein bL27 family.

This Halothermothrix orenii (strain H 168 / OCM 544 / DSM 9562) protein is Large ribosomal subunit protein bL27.